Consider the following 650-residue polypeptide: Acetyl-coenzyme A synthetase (650 aa).

CoA-binding positions include 191–194 (RGGR), threonine 311, and asparagine 335. ATP contacts are provided by residues 387–389 (GEP), 411–416 (DTWWQT), aspartate 500, and arginine 515. Position 523 (serine 523) interacts with CoA. Position 526 (arginine 526) interacts with ATP. The Mg(2+) site is built by valine 537, histidine 539, and valine 542. Residue arginine 584 participates in CoA binding. Lysine 609 is subject to N6-acetyllysine.

Belongs to the ATP-dependent AMP-binding enzyme family. Mg(2+) is required as a cofactor. In terms of processing, acetylated. Deacetylation by the SIR2-homolog deacetylase activates the enzyme.

It catalyses the reaction acetate + ATP + CoA = acetyl-CoA + AMP + diphosphate. Catalyzes the conversion of acetate into acetyl-CoA (AcCoA), an essential intermediate at the junction of anabolic and catabolic pathways. AcsA undergoes a two-step reaction. In the first half reaction, AcsA combines acetate with ATP to form acetyl-adenylate (AcAMP) intermediate. In the second half reaction, it can then transfer the acetyl group from AcAMP to the sulfhydryl group of CoA, forming the product AcCoA. In Shewanella sp. (strain ANA-3), this protein is Acetyl-coenzyme A synthetase.